Consider the following 517-residue polypeptide: 2,3-bisphosphoglycerate-independent phosphoglycerate mutase (517 aa).

Mn(2+) contacts are provided by Asp-12 and Ser-62. Ser-62 serves as the catalytic Phosphoserine intermediate. Residues His-123, Arg-153–Asp-154, Arg-185, Arg-191, Arg-261–Arg-264, and Lys-336 contribute to the substrate site. Residues Asp-403, His-407, Asp-444, His-445, and His-463 each coordinate Mn(2+).

It belongs to the BPG-independent phosphoglycerate mutase family. Monomer. It depends on Mn(2+) as a cofactor.

It carries out the reaction (2R)-2-phosphoglycerate = (2R)-3-phosphoglycerate. It participates in carbohydrate degradation; glycolysis; pyruvate from D-glyceraldehyde 3-phosphate: step 3/5. In terms of biological role, catalyzes the interconversion of 2-phosphoglycerate and 3-phosphoglycerate. This is 2,3-bisphosphoglycerate-independent phosphoglycerate mutase from Methylobacillus flagellatus (strain ATCC 51484 / DSM 6875 / VKM B-1610 / KT).